Here is a 347-residue protein sequence, read N- to C-terminus: Ribosomal RNA large subunit methyltransferase M (347 aa).

Residues Ser-184, 217-220 (APGG), Asp-236, Asp-256, and Asp-272 contribute to the S-adenosyl-L-methionine site. The active-site Proton acceptor is Lys-301.

Belongs to the class I-like SAM-binding methyltransferase superfamily. RNA methyltransferase RlmE family. RlmM subfamily. As to quaternary structure, monomer.

Its subcellular location is the cytoplasm. The enzyme catalyses cytidine(2498) in 23S rRNA + S-adenosyl-L-methionine = 2'-O-methylcytidine(2498) in 23S rRNA + S-adenosyl-L-homocysteine + H(+). In terms of biological role, catalyzes the 2'-O-methylation at nucleotide C2498 in 23S rRNA. The polypeptide is Ribosomal RNA large subunit methyltransferase M (Xanthomonas campestris pv. campestris (strain 8004)).